The primary structure comprises 182 residues: MMRKINEIFYSLQGEGYHTGTPAVFIRFSGCNLKCSFCDTQHEAGTLMTDDEIIAEVSKYPAVTVILTGGEPSLWIDDALIDRLHEAGKYVCIETNGTRPLPESIDWVTCSPKQGVKLGITRMDEVKVVYEGQDISIYELLPAEHFFLQPCSCNNTALTVDCVMRHPKWRLSLQTHKLIDIR.

Residues 12-14 (LQG) and arginine 27 each bind substrate. The Radical SAM core domain occupies 18-182 (HTGTPAVFIR…LQTHKLIDIR (165 aa)). [4Fe-4S] cluster is bound by residues cysteine 31, cysteine 35, and cysteine 38. Threonine 40 lines the Mg(2+) pocket. Residue threonine 68 coordinates substrate. S-adenosyl-L-methionine-binding positions include glycine 70 and 111 to 113 (SPK).

It belongs to the radical SAM superfamily. 7-carboxy-7-deazaguanine synthase family. As to quaternary structure, homodimer. It depends on [4Fe-4S] cluster as a cofactor. Requires S-adenosyl-L-methionine as cofactor. Mg(2+) is required as a cofactor.

It catalyses the reaction 6-carboxy-5,6,7,8-tetrahydropterin + H(+) = 7-carboxy-7-deazaguanine + NH4(+). The protein operates within purine metabolism; 7-cyano-7-deazaguanine biosynthesis. In terms of biological role, catalyzes the complex heterocyclic radical-mediated conversion of 6-carboxy-5,6,7,8-tetrahydropterin (CPH4) to 7-carboxy-7-deazaguanine (CDG), a step common to the biosynthetic pathways of all 7-deazapurine-containing compounds. The protein is 7-carboxy-7-deazaguanine synthase of Bacteroides thetaiotaomicron (strain ATCC 29148 / DSM 2079 / JCM 5827 / CCUG 10774 / NCTC 10582 / VPI-5482 / E50).